The sequence spans 253 residues: Tryptophan synthase alpha chain (253 aa).

Residues E46 and D57 each act as proton acceptor in the active site.

Belongs to the TrpA family. In terms of assembly, tetramer of two alpha and two beta chains.

It catalyses the reaction (1S,2R)-1-C-(indol-3-yl)glycerol 3-phosphate + L-serine = D-glyceraldehyde 3-phosphate + L-tryptophan + H2O. It functions in the pathway amino-acid biosynthesis; L-tryptophan biosynthesis; L-tryptophan from chorismate: step 5/5. The alpha subunit is responsible for the aldol cleavage of indoleglycerol phosphate to indole and glyceraldehyde 3-phosphate. This Dictyoglomus turgidum (strain DSM 6724 / Z-1310) protein is Tryptophan synthase alpha chain.